Here is an 890-residue protein sequence, read N- to C-terminus: DNA mismatch repair protein MutS (890 aa).

Position 645–652 (645–652) interacts with ATP; sequence GPNMAGKS.

It belongs to the DNA mismatch repair MutS family.

This protein is involved in the repair of mismatches in DNA. It is possible that it carries out the mismatch recognition step. This protein has a weak ATPase activity. This chain is DNA mismatch repair protein MutS, found in Rickettsia africae (strain ESF-5).